The following is a 227-amino-acid chain: Zeamatin (227 aa).

Residues Met1 to Glu20 form the signal peptide. 8 disulfides stabilise this stretch: Cys30–Cys226, Cys72–Cys82, Cys87–Cys93, Cys139–Cys215, Cys145–Cys198, Cys153–Cys163, Cys167–Cys176, and Cys177–Cys185.

This sequence belongs to the thaumatin family.

Functionally, has antifungal activity. Inhibits Candida albicans and Trichoderma reesei; marginal inhibition observed against Alternaria solani and Neurospora crassa. In Zea mays (Maize), this protein is Zeamatin (Zlp).